A 276-amino-acid chain; its full sequence is Large ribosomal subunit protein uL2 (276 aa).

Disordered stretches follow at residues 37-59 (QFQKSGRNNNGHITTRHKGGGHK) and 225-276 (VMNP…RHKR). Residues 39 to 49 (QKSGRNNNGHI) show a composition bias toward polar residues. Residues 50–59 (TTRHKGGGHK) show a composition bias toward basic residues.

Belongs to the universal ribosomal protein uL2 family. Part of the 50S ribosomal subunit. Forms a bridge to the 30S subunit in the 70S ribosome.

In terms of biological role, one of the primary rRNA binding proteins. Required for association of the 30S and 50S subunits to form the 70S ribosome, for tRNA binding and peptide bond formation. It has been suggested to have peptidyltransferase activity; this is somewhat controversial. Makes several contacts with the 16S rRNA in the 70S ribosome. The chain is Large ribosomal subunit protein uL2 from Cupriavidus pinatubonensis (strain JMP 134 / LMG 1197) (Cupriavidus necator (strain JMP 134)).